Consider the following 368-residue polypeptide: Cobalt-precorrin-5B C(1)-methyltransferase (368 aa).

This sequence belongs to the CbiD family.

The catalysed reaction is Co-precorrin-5B + S-adenosyl-L-methionine = Co-precorrin-6A + S-adenosyl-L-homocysteine. The protein operates within cofactor biosynthesis; adenosylcobalamin biosynthesis; cob(II)yrinate a,c-diamide from sirohydrochlorin (anaerobic route): step 6/10. In terms of biological role, catalyzes the methylation of C-1 in cobalt-precorrin-5B to form cobalt-precorrin-6A. In Brucella abortus (strain S19), this protein is Cobalt-precorrin-5B C(1)-methyltransferase.